The following is a 362-amino-acid chain: 3-isopropylmalate dehydrogenase (362 aa).

Position 78 to 91 (78 to 91 (GPQWDTLPSDKRPE)) interacts with NAD(+). Residues Arg-98, Arg-108, Arg-136, and Asp-226 each coordinate substrate. Residues Asp-226, Asp-250, and Asp-254 each contribute to the Mg(2+) site. 284–296 (GSAPDIAGQDKAN) serves as a coordination point for NAD(+).

It belongs to the isocitrate and isopropylmalate dehydrogenases family. LeuB type 1 subfamily. As to quaternary structure, homodimer. The cofactor is Mg(2+). It depends on Mn(2+) as a cofactor.

It localises to the cytoplasm. The catalysed reaction is (2R,3S)-3-isopropylmalate + NAD(+) = 4-methyl-2-oxopentanoate + CO2 + NADH. The protein operates within amino-acid biosynthesis; L-leucine biosynthesis; L-leucine from 3-methyl-2-oxobutanoate: step 3/4. Catalyzes the oxidation of 3-carboxy-2-hydroxy-4-methylpentanoate (3-isopropylmalate) to 3-carboxy-4-methyl-2-oxopentanoate. The product decarboxylates to 4-methyl-2 oxopentanoate. The sequence is that of 3-isopropylmalate dehydrogenase from Gloeobacter violaceus (strain ATCC 29082 / PCC 7421).